Reading from the N-terminus, the 564-residue chain is Urocanate hydratase (564 aa).

NAD(+) contacts are provided by residues 54 to 55 (GG), Gln-132, 178 to 180 (GMG), Glu-198, Arg-203, 244 to 245 (NA), 269 to 273 (QTSAH), 279 to 280 (YL), and Tyr-328. Residue Cys-416 is part of the active site. Residue Gly-498 coordinates NAD(+).

The protein belongs to the urocanase family. Homodimer. It depends on NAD(+) as a cofactor.

It carries out the reaction 4-imidazolone-5-propanoate = trans-urocanate + H2O. The protein operates within amino-acid degradation; L-histidine degradation into L-glutamate; N-formimidoyl-L-glutamate from L-histidine: step 2/3. The sequence is that of Urocanate hydratase from Trifolium repens (Creeping white clover).